Consider the following 876-residue polypeptide: Alanine--tRNA ligase (876 aa).

H568, H572, C670, and H674 together coordinate Zn(2+).

The protein belongs to the class-II aminoacyl-tRNA synthetase family. It depends on Zn(2+) as a cofactor.

It localises to the cytoplasm. The catalysed reaction is tRNA(Ala) + L-alanine + ATP = L-alanyl-tRNA(Ala) + AMP + diphosphate. In terms of biological role, catalyzes the attachment of alanine to tRNA(Ala) in a two-step reaction: alanine is first activated by ATP to form Ala-AMP and then transferred to the acceptor end of tRNA(Ala). Also edits incorrectly charged Ser-tRNA(Ala) and Gly-tRNA(Ala) via its editing domain. In Geobacter metallireducens (strain ATCC 53774 / DSM 7210 / GS-15), this protein is Alanine--tRNA ligase.